A 92-amino-acid chain; its full sequence is Small ribosomal subunit protein uS19 (92 aa).

This sequence belongs to the universal ribosomal protein uS19 family.

In terms of biological role, protein S19 forms a complex with S13 that binds strongly to the 16S ribosomal RNA. This Desulfatibacillum aliphaticivorans protein is Small ribosomal subunit protein uS19.